The following is a 420-amino-acid chain: MTNVLIEDLKWRGLIYQQTDEQGIEDLLNKEQVTLYCGADPTADSLHIGHLLPFLTLRRFQEHGHRPIVLIGGGTGMIGDPSGKSEERVLQTEEQVDKNIEGISKQIHNIFEFGTDHGAVLVNNRDWLGQISLISFLRDYGKHVGVNYMLGKDSIQSRLEHGISYTEFTYTILQAIDFGHLNRELNCKIQVGGSDQWGNITSGIELMRRMYGQTDAYGLTIPLVTKSDGKKFGKSESGAVWLDAEKTSPYEFYQFWINQSDEDVIKFLKYFTFLGKEEIDRLEQSKNEAPHLREAQKTLAEEVTKFIHGEDALNDAIRISQALFSGDLKSLSAKELKDGFKDVPQVTLSNDTTNIVEVLIETGISPSKRQAREDVNNGAIYINGERQQDVNYALAPEDKIDGEFTIIRRGKKKYFMVNYQ.

Tyr36 provides a ligand contact to L-tyrosine. Residues 41-50 carry the 'HIGH' region motif; sequence PTADSLHIGH. The L-tyrosine site is built by Tyr170 and Gln174. Positions 231–235 match the 'KMSKS' region motif; sequence KFGKS. Lys234 contributes to the ATP binding site. The region spanning 353 to 420 is the S4 RNA-binding domain; sequence TNIVEVLIET…KKKYFMVNYQ (68 aa).

This sequence belongs to the class-I aminoacyl-tRNA synthetase family. TyrS type 1 subfamily. In terms of assembly, homodimer.

It is found in the cytoplasm. It carries out the reaction tRNA(Tyr) + L-tyrosine + ATP = L-tyrosyl-tRNA(Tyr) + AMP + diphosphate + H(+). Functionally, catalyzes the attachment of tyrosine to tRNA(Tyr) in a two-step reaction: tyrosine is first activated by ATP to form Tyr-AMP and then transferred to the acceptor end of tRNA(Tyr). The chain is Tyrosine--tRNA ligase from Staphylococcus aureus (strain COL).